We begin with the raw amino-acid sequence, 380 residues long: Cytochrome b (380 aa).

A run of 4 helical transmembrane segments spans residues 34 to 54, 78 to 99, 114 to 134, and 179 to 199; these read FGSL…LLAA, WLIR…YLHI, WNTG…GYVL, and FFTL…IHLT. The heme b site is built by His84 and His98. The heme b site is built by His183 and His197. Residue His202 participates in a ubiquinone binding. 4 helical membrane-spanning segments follow: residues 227–247, 289–309, 321–341, and 348–368; these read LKDI…ALFS, LGGV…PLLH, FSQL…WVGS, and FIII…ILFP.

Belongs to the cytochrome b family. In terms of assembly, the cytochrome bc1 complex contains 11 subunits: 3 respiratory subunits (MT-CYB, CYC1 and UQCRFS1), 2 core proteins (UQCRC1 and UQCRC2) and 6 low-molecular weight proteins (UQCRH/QCR6, UQCRB/QCR7, UQCRQ/QCR8, UQCR10/QCR9, UQCR11/QCR10 and a cleavage product of UQCRFS1). This cytochrome bc1 complex then forms a dimer. Heme b is required as a cofactor.

The protein localises to the mitochondrion inner membrane. Its function is as follows. Component of the ubiquinol-cytochrome c reductase complex (complex III or cytochrome b-c1 complex) that is part of the mitochondrial respiratory chain. The b-c1 complex mediates electron transfer from ubiquinol to cytochrome c. Contributes to the generation of a proton gradient across the mitochondrial membrane that is then used for ATP synthesis. The polypeptide is Cytochrome b (MT-CYB) (Bugeranus carunculatus (Wattled crane)).